A 428-amino-acid chain; its full sequence is Citrate synthase (428 aa).

Catalysis depends on residues H265, H306, and D363.

Belongs to the citrate synthase family. In terms of assembly, homohexamer.

The enzyme catalyses oxaloacetate + acetyl-CoA + H2O = citrate + CoA + H(+). Its pathway is carbohydrate metabolism; tricarboxylic acid cycle; isocitrate from oxaloacetate: step 1/2. With respect to regulation, allosterically inhibited by NADH. The sequence is that of Citrate synthase (gltA) from Pseudomonas aeruginosa (strain ATCC 15692 / DSM 22644 / CIP 104116 / JCM 14847 / LMG 12228 / 1C / PRS 101 / PAO1).